Here is a 198-residue protein sequence, read N- to C-terminus: MHILIISISYFLGSLPTGFLFGKFLKNIDLRLTGSGSTGATNVLRNVGKWPAFFVFIIDVGKGLIAVKIAQHYTNQNLFEVLAGIAAISGHIWPIWLKGKGGKAVATGLGMFIALSWKIGFASLGIFLIILAKSKIVSLSSISAAIFLPFLMFLDIGSTNHPYFFISLVVSILVIWKHRTNIRRLLKGEELKINDINK.

6 consecutive transmembrane segments (helical) span residues 1 to 21 (MHILIISISYFLGSLPTGFLF), 50 to 70 (WPAFFVFIIDVGKGLIAVKIA), 77 to 97 (NLFEVLAGIAAISGHIWPIWL), 111 to 131 (MFIALSWKIGFASLGIFLIIL), 136 to 156 (IVSLSSISAAIFLPFLMFLDI), and 157 to 177 (GSTNHPYFFISLVVSILVIWK).

Belongs to the PlsY family. Probably interacts with PlsX.

It is found in the cell inner membrane. It catalyses the reaction an acyl phosphate + sn-glycerol 3-phosphate = a 1-acyl-sn-glycero-3-phosphate + phosphate. It functions in the pathway lipid metabolism; phospholipid metabolism. Functionally, catalyzes the transfer of an acyl group from acyl-phosphate (acyl-PO(4)) to glycerol-3-phosphate (G3P) to form lysophosphatidic acid (LPA). This enzyme utilizes acyl-phosphate as fatty acyl donor, but not acyl-CoA or acyl-ACP. This is Glycerol-3-phosphate acyltransferase from Prochlorococcus marinus subsp. pastoris (strain CCMP1986 / NIES-2087 / MED4).